Here is a 101-residue protein sequence, read N- to C-terminus: Signal recognition particle 19 kDa protein (101 aa).

Belongs to the SRP19 family. As to quaternary structure, part of the signal recognition particle protein translocation system, which is composed of SRP and FtsY. Archaeal SRP consists of a 7S RNA molecule of 300 nucleotides and two protein subunits: SRP54 and SRP19.

The protein resides in the cytoplasm. Functionally, involved in targeting and insertion of nascent membrane proteins into the cytoplasmic membrane. Binds directly to 7S RNA and mediates binding of the 54 kDa subunit of the SRP. The polypeptide is Signal recognition particle 19 kDa protein (Methanosarcina barkeri (strain Fusaro / DSM 804)).